The chain runs to 384 residues: S-adenosylmethionine synthase (384 aa).

Residue His15 coordinates ATP. Mg(2+) is bound at residue Asp17. K(+) is bound at residue Glu43. The L-methionine site is built by Glu56 and Gln99. Residues 99 to 109 form a flexible loop region; the sequence is QSADINQGVDR. ATP-binding positions include 164–166, 230–231, Asp239, 245–246, Ala262, and Lys266; these read DAK, RF, and RK. Residue Asp239 participates in L-methionine binding. Position 270 (Lys270) interacts with L-methionine.

This sequence belongs to the AdoMet synthase family. As to quaternary structure, homotetramer; dimer of dimers. Mg(2+) is required as a cofactor. It depends on K(+) as a cofactor.

Its subcellular location is the cytoplasm. The enzyme catalyses L-methionine + ATP + H2O = S-adenosyl-L-methionine + phosphate + diphosphate. The protein operates within amino-acid biosynthesis; S-adenosyl-L-methionine biosynthesis; S-adenosyl-L-methionine from L-methionine: step 1/1. Functionally, catalyzes the formation of S-adenosylmethionine (AdoMet) from methionine and ATP. The overall synthetic reaction is composed of two sequential steps, AdoMet formation and the subsequent tripolyphosphate hydrolysis which occurs prior to release of AdoMet from the enzyme. This is S-adenosylmethionine synthase from Haemophilus influenzae (strain ATCC 51907 / DSM 11121 / KW20 / Rd).